The primary structure comprises 154 residues: NADPH-dependent 7-cyano-7-deazaguanine reductase (154 aa).

Positions 1-21 (MPNTDVSSLSMLGQQTETAQS) are enriched in polar residues. The disordered stretch occupies residues 1–28 (MPNTDVSSLSMLGQQTETAQSPEEAVLE). Residue C52 is the Thioimide intermediate of the active site. Catalysis depends on D59, which acts as the Proton donor. Residues 74-76 (VES) and 93-94 (HE) contribute to the substrate site.

This sequence belongs to the GTP cyclohydrolase I family. QueF type 1 subfamily.

It localises to the cytoplasm. The enzyme catalyses 7-aminomethyl-7-carbaguanine + 2 NADP(+) = 7-cyano-7-deazaguanine + 2 NADPH + 3 H(+). It functions in the pathway tRNA modification; tRNA-queuosine biosynthesis. In terms of biological role, catalyzes the NADPH-dependent reduction of 7-cyano-7-deazaguanine (preQ0) to 7-aminomethyl-7-deazaguanine (preQ1). The sequence is that of NADPH-dependent 7-cyano-7-deazaguanine reductase from Rhizobium johnstonii (strain DSM 114642 / LMG 32736 / 3841) (Rhizobium leguminosarum bv. viciae).